The following is a 527-amino-acid chain: Cytochrome P450 monooygenase 3 (527 aa).

Residues 21-41 (IAVAFAALCGATGLLAFSWWI) traverse the membrane as a helical segment. Residue C473 participates in heme binding.

It belongs to the cytochrome P450 family. Requires heme as cofactor.

It is found in the membrane. It participates in plant hormone biosynthesis; gibberellin biosynthesis. Its function is as follows. Gibberellin 13-hydroxylase; part of the gene cluster that mediates the biosynthesis of gibberellins (GAs), diterpenoids that may provide a selective advantage during infection of the preferred host plant, rice. Gibberellins (GAs) are diterpenoids and are synthesized via the mevalonate pathway. Biosynthesis of the major metabolite GA3 (gibberellic acid) from geranylgeranyl diphosphate (GGPP) requires 13 steps. The GGPP produced by the geranylgeranyl diphosphate synthase GGS2 is converted to ent-kaurene via ent-copalyldiphosphate in a two-step cyclization reaction performed by the bifunctional ent-copalyl diphosphate synthase/ent-kaurene synthase enzyme (CPS/KS). Ent-Kaurene is metabolized to GAs by a series of oxidation reactions catalyzed by cytochrome P450 monooxygenases. Cytochrome P450 monooxygenase P450-4 is an ent-kaurene oxidase that catalyzes the three oxidation steps between ent-kaurene and ent-kaurenoic acid. The highly multifunctional cytochrome P450 monooxygenase P450-1 then catalyzes four steps involving oxidation at two carbon atoms, in the main pathway from ent-kaurenoic acid to GA14 via GA12-aldehyde as well as producing kaurenolides and fujenoic acids as by-products. The cytochrome P450 monooxygenase P450-2 then converts GA14 to GA4 by removal of C-20. GA4 is further converted to GA7 by the GA4 desaturase DES via 1,2-desaturation before cytochrome P450 monooxygenase P450-3, a 13-hydroxylase, hydroxylates GA7 to GA3, the final product of the GA-biosynthetic pathway. This chain is Cytochrome P450 monooygenase 3, found in Gibberella fujikuroi (strain CBS 195.34 / IMI 58289 / NRRL A-6831) (Bakanae and foot rot disease fungus).